A 61-amino-acid polypeptide reads, in one-letter code: Sodium/potassium-transporting ATPase subunit gamma (61 aa).

A helical transmembrane segment spans residues 24–44 (KGGLIFAAIAFVVGMLIIFSG).

The protein belongs to the FXYD family. As to quaternary structure, regulatory subunit of the sodium/potassium-transporting ATPase which is composed of a catalytic alpha subunit, an auxiliary non-catalytic beta subunit and an additional regulatory subunit.

Its subcellular location is the membrane. Functionally, may be involved in forming the receptor site for cardiac glycoside binding or may modulate the transport function of the sodium ATPase. This chain is Sodium/potassium-transporting ATPase subunit gamma (fxyd2), found in Xenopus laevis (African clawed frog).